A 715-amino-acid chain; its full sequence is Fatty acid oxidation complex subunit alpha (715 aa).

Positions 1 to 190 are enoyl-CoA hydratase/isomerase; that stretch reads MIYEGKAITV…KVGAVDAVVA (190 aa). Asp297 lines the substrate pocket. Residues 312–715 form a 3-hydroxyacyl-CoA dehydrogenase region; the sequence is KDVKQAAVLG…MAKNGQSFFG (404 aa). NAD(+) contacts are provided by residues Met325, Asp344, 401 to 403, Lys408, and Ser430; that span reads VVE. The active-site For 3-hydroxyacyl-CoA dehydrogenase activity is His451. Residue Asn454 participates in NAD(+) binding. Asn501 and Tyr660 together coordinate substrate.

In the N-terminal section; belongs to the enoyl-CoA hydratase/isomerase family. This sequence in the C-terminal section; belongs to the 3-hydroxyacyl-CoA dehydrogenase family. Heterotetramer of two alpha chains (FadB) and two beta chains (FadA).

It catalyses the reaction a (3S)-3-hydroxyacyl-CoA + NAD(+) = a 3-oxoacyl-CoA + NADH + H(+). The enzyme catalyses a (3S)-3-hydroxyacyl-CoA = a (2E)-enoyl-CoA + H2O. The catalysed reaction is a 4-saturated-(3S)-3-hydroxyacyl-CoA = a (3E)-enoyl-CoA + H2O. It carries out the reaction (3S)-3-hydroxybutanoyl-CoA = (3R)-3-hydroxybutanoyl-CoA. It catalyses the reaction a (3Z)-enoyl-CoA = a 4-saturated (2E)-enoyl-CoA. The enzyme catalyses a (3E)-enoyl-CoA = a 4-saturated (2E)-enoyl-CoA. Its pathway is lipid metabolism; fatty acid beta-oxidation. Its function is as follows. Involved in the aerobic and anaerobic degradation of long-chain fatty acids via beta-oxidation cycle. Catalyzes the formation of 3-oxoacyl-CoA from enoyl-CoA via L-3-hydroxyacyl-CoA. It can also use D-3-hydroxyacyl-CoA and cis-3-enoyl-CoA as substrate. The chain is Fatty acid oxidation complex subunit alpha from Pseudomonas fluorescens (strain ATCC BAA-477 / NRRL B-23932 / Pf-5).